A 343-amino-acid polypeptide reads, in one-letter code: Trans-enoyl reductase ACTTS2 (343 aa).

Position 42–45 (42–45 (GDWK)) interacts with NADP(+). 128–135 (VGITTVGQ) contributes to the substrate binding site. NADP(+) contacts are provided by residues 162 to 165 (STAT), 185 to 188 (SPHN), and tyrosine 203. 268–272 (GYTAL) is a binding site for substrate. An NADP(+)-binding site is contributed by 333–334 (VS).

This sequence belongs to the zinc-containing alcohol dehydrogenase family. As to quaternary structure, monomer.

The protein operates within mycotoxin biosynthesis. Its function is as follows. Trans-enoyl reductase; part of the gene clusters that mediate the biosynthesis of the host-selective toxins (HSTs) ACT-toxins responsible for brown spot of tangerine disease by the tangerine pathotype which affects tangerines and mandarins. ACT-toxins consist of three moieties, 9,10-epoxy-8-hydroxy-9-methyl-decatrienoic acid (EDA), valine and a polyketide. ACT-toxin I is toxic to both citrus and pear; toxin II the 5''-deoxy derivative of ACT-toxin I, is highly toxic to pear and slightly toxic to citrus. On cellular level, ACT-toxins affect plasma membrane of susceptible cells and cause a sudden increase in loss of K(+) after a few minutes of toxin treatment. The acyl-CoA ligase ACTT1, the hydrolase ACTT2, the enoyl-CoA hydratases ACTT3 and ACTT6, and the acyl-CoA synthetase ACTT5 are all involved in the biosynthesis of the AK-, AF- and ACT-toxin common 9,10-epoxy-8-hydroxy-9-methyl-decatrienoic acid (EDA) structural moiety. The exact role of each enzyme, and of additional enzymes identified within the AF-toxin clusters have still to be determined. On the other hand, ACTTS1 to ACTTS4 are specific to the tangerine pathotype. The function of ACTTS3 is to elongate the polyketide chain portion of ACT-toxin that is unique to this toxin. The enoyl-reductase ACTTS2 might complement the missing enoyl-reductase (ER) domain in ACTTS3 in the synthesis of the polyketide portion of ACT-toxin. The roles of the nonribosomal peptide synthetases-related proteins ACTTS1 and ACTTS4 have also still not been elucidated. The protein is Trans-enoyl reductase ACTTS2 of Alternaria alternata (Alternaria rot fungus).